Reading from the N-terminus, the 565-residue chain is Periplasmic trehalase (565 aa).

A signal peptide spans 1–30 (MKSPAPSRPQKMALIPACIFLCFAALSVQA). Residues R152, 159-160 (WD), N196, 205-207 (RSQ), 277-279 (RPE), and G310 each bind substrate. Residues D312 and E496 each act as proton donor/acceptor in the active site. E511 lines the substrate pocket. Residues 539 to 565 (CDNVPATRPLSESTTQPLKQKEAEPTP) are disordered.

This sequence belongs to the glycosyl hydrolase 37 family. As to quaternary structure, monomer.

It localises to the periplasm. The enzyme catalyses alpha,alpha-trehalose + H2O = alpha-D-glucose + beta-D-glucose. In terms of biological role, provides the cells with the ability to utilize trehalose at high osmolarity by splitting it into glucose molecules that can subsequently be taken up by the phosphotransferase-mediated uptake system. The chain is Periplasmic trehalase from Escherichia coli O1:K1 / APEC.